The sequence spans 658 residues: UvrABC system protein B (658 aa).

One can recognise a Helicase ATP-binding domain in the interval 25–182; that stretch reads DSIRSGNKFN…LKLVDMGYKR (158 aa). Residue 38-45 participates in ATP binding; sequence GVTGSGKT. Positions 91 to 114 match the Beta-hairpin motif; sequence YYDYYQPEAYIPRQDLFIEKDSSI. In terms of domain architecture, Helicase C-terminal spans 433-596; that stretch reads QVEVLFDRAK…TPRSASRNLE (164 aa). A UVR domain is found at 623–658; it reads AKIVKELRKQMLEAAKNLEFEKAAALRDEIAKLREL.

This sequence belongs to the UvrB family. In terms of assembly, forms a heterotetramer with UvrA during the search for lesions. Interacts with UvrC in an incision complex.

Its subcellular location is the cytoplasm. In terms of biological role, the UvrABC repair system catalyzes the recognition and processing of DNA lesions. A damage recognition complex composed of 2 UvrA and 2 UvrB subunits scans DNA for abnormalities. Upon binding of the UvrA(2)B(2) complex to a putative damaged site, the DNA wraps around one UvrB monomer. DNA wrap is dependent on ATP binding by UvrB and probably causes local melting of the DNA helix, facilitating insertion of UvrB beta-hairpin between the DNA strands. Then UvrB probes one DNA strand for the presence of a lesion. If a lesion is found the UvrA subunits dissociate and the UvrB-DNA preincision complex is formed. This complex is subsequently bound by UvrC and the second UvrB is released. If no lesion is found, the DNA wraps around the other UvrB subunit that will check the other stand for damage. This Campylobacter fetus subsp. fetus (strain 82-40) protein is UvrABC system protein B.